The following is a 249-amino-acid chain: Type III pantothenate kinase (249 aa).

ATP is bound at residue 6 to 13 (DCGNSFIK). Residues Tyr93 and 100 to 103 (GLDR) each bind substrate. Residue Asp102 is the Proton acceptor of the active site. Asp122 contributes to the K(+) binding site. Residue Thr125 coordinates ATP. Thr181 contacts substrate.

This sequence belongs to the type III pantothenate kinase family. As to quaternary structure, homodimer. Requires NH4(+) as cofactor. K(+) serves as cofactor.

It localises to the cytoplasm. It carries out the reaction (R)-pantothenate + ATP = (R)-4'-phosphopantothenate + ADP + H(+). The protein operates within cofactor biosynthesis; coenzyme A biosynthesis; CoA from (R)-pantothenate: step 1/5. Catalyzes the phosphorylation of pantothenate (Pan), the first step in CoA biosynthesis. This Pseudomonas fluorescens (strain SBW25) protein is Type III pantothenate kinase.